A 538-amino-acid polypeptide reads, in one-letter code: Chaperonin GroEL (538 aa).

Residues 29 to 32 (TIGP), 86 to 90 (DGTTT), G413, 476 to 478 (NAA), and D492 contribute to the ATP site.

This sequence belongs to the chaperonin (HSP60) family. In terms of assembly, forms a cylinder of 14 subunits composed of two heptameric rings stacked back-to-back. Interacts with the co-chaperonin GroES.

It is found in the cytoplasm. It catalyses the reaction ATP + H2O + a folded polypeptide = ADP + phosphate + an unfolded polypeptide.. Its function is as follows. Together with its co-chaperonin GroES, plays an essential role in assisting protein folding. The GroEL-GroES system forms a nano-cage that allows encapsulation of the non-native substrate proteins and provides a physical environment optimized to promote and accelerate protein folding. The chain is Chaperonin GroEL from Staphylococcus aureus (strain USA300).